A 504-amino-acid chain; its full sequence is Anaerobic nitric oxide reductase transcription regulator NorR (504 aa).

Asp57 bears the 4-aspartylphosphate mark. One can recognise a Sigma-54 factor interaction domain in the interval 187-416 (MIGLSPGMTQ…LEHAIHRAVV (230 aa)). Residues 215–222 (GETGTGKE) and 278–287 (ADNGTLFLDE) contribute to the ATP site. A DNA-binding region (H-T-H motif) is located at residues 479–498 (WAACARMLETDVANLHRLAK).

Its pathway is nitrogen metabolism; nitric oxide reduction. Functionally, required for the expression of anaerobic nitric oxide (NO) reductase, acts as a transcriptional activator for at least the norVW operon. Activation also requires sigma-54. The protein is Anaerobic nitric oxide reductase transcription regulator NorR of Escherichia coli O81 (strain ED1a).